Here is a 155-residue protein sequence, read N- to C-terminus: Ribosomal RNA large subunit methyltransferase H (155 aa).

S-adenosyl-L-methionine contacts are provided by residues Leu-72, Gly-104, and 123–128 (LAKITL).

Belongs to the RNA methyltransferase RlmH family. In terms of assembly, homodimer.

The protein resides in the cytoplasm. The enzyme catalyses pseudouridine(1915) in 23S rRNA + S-adenosyl-L-methionine = N(3)-methylpseudouridine(1915) in 23S rRNA + S-adenosyl-L-homocysteine + H(+). Functionally, specifically methylates the pseudouridine at position 1915 (m3Psi1915) in 23S rRNA. The chain is Ribosomal RNA large subunit methyltransferase H from Mycoplasma capricolum subsp. capricolum (strain California kid / ATCC 27343 / NCTC 10154).